Reading from the N-terminus, the 226-residue chain is Large ribosomal subunit protein uL3 (226 aa).

Residues 135 to 150 (MSSQRASHGNSRSHNV) show a composition bias toward polar residues. Residues 135-158 (MSSQRASHGNSRSHNVPGSIGMAQ) are disordered. Gln158 is subject to N5-methylglutamine.

It belongs to the universal ribosomal protein uL3 family. In terms of assembly, part of the 50S ribosomal subunit. Forms a cluster with proteins L14 and L19. Methylated by PrmB.

Its function is as follows. One of the primary rRNA binding proteins, it binds directly near the 3'-end of the 23S rRNA, where it nucleates assembly of the 50S subunit. The protein is Large ribosomal subunit protein uL3 of Variovorax paradoxus (strain S110).